The sequence spans 176 residues: Transcription factor E (176 aa).

In terms of domain architecture, HTH TFE/IIEalpha-type spans 8–90; sequence EDPVIQKYLH…LWTFQYEKIP (83 aa).

Belongs to the TFE family. In terms of assembly, monomer. Interaction with RNA polymerase subunits RpoF and RpoE is necessary for Tfe stimulatory transcription activity. Able to interact with Tbp and RNA polymerase in the absence of DNA promoter. Interacts both with the preinitiation and elongation complexes.

Its function is as follows. Transcription factor that plays a role in the activation of archaeal genes transcribed by RNA polymerase. Facilitates transcription initiation by enhancing TATA-box recognition by TATA-box-binding protein (Tbp), and transcription factor B (Tfb) and RNA polymerase recruitment. Not absolutely required for transcription in vitro, but particularly important in cases where Tbp or Tfb function is not optimal. It dynamically alters the nucleic acid-binding properties of RNA polymerases by stabilizing the initiation complex and destabilizing elongation complexes. Seems to translocate with the RNA polymerase following initiation and acts by binding to the non template strand of the transcription bubble in elongation complexes. This Haloarcula marismortui (strain ATCC 43049 / DSM 3752 / JCM 8966 / VKM B-1809) (Halobacterium marismortui) protein is Transcription factor E.